Consider the following 247-residue polypeptide: Adenosylcobinamide-GDP ribazoletransferase (247 aa).

Helical transmembrane passes span 34–54 (IITF…VFMA), 59–79 (FGVP…TGGF), 113–133 (GGLA…ELAL), 138–158 (ILAS…LLMY), and 194–214 (VLLP…AIFI).

Belongs to the CobS family. Requires Mg(2+) as cofactor.

It localises to the cell inner membrane. The catalysed reaction is alpha-ribazole + adenosylcob(III)inamide-GDP = adenosylcob(III)alamin + GMP + H(+). The enzyme catalyses alpha-ribazole 5'-phosphate + adenosylcob(III)inamide-GDP = adenosylcob(III)alamin 5'-phosphate + GMP + H(+). Its pathway is cofactor biosynthesis; adenosylcobalamin biosynthesis; adenosylcobalamin from cob(II)yrinate a,c-diamide: step 7/7. Joins adenosylcobinamide-GDP and alpha-ribazole to generate adenosylcobalamin (Ado-cobalamin). Also synthesizes adenosylcobalamin 5'-phosphate from adenosylcobinamide-GDP and alpha-ribazole 5'-phosphate. The chain is Adenosylcobinamide-GDP ribazoletransferase from Escherichia coli O17:K52:H18 (strain UMN026 / ExPEC).